A 448-amino-acid chain; its full sequence is N-succinylarginine dihydrolase (448 aa).

Substrate contacts are provided by residues 19 to 28 (AGLSYGNVAS), Asn110, and 137 to 138 (HR). The active site involves Glu174. Residue Arg214 participates in substrate binding. Residue His250 is part of the active site. Positions 252 and 364 each coordinate substrate. Residue Cys370 is the Nucleophile of the active site.

Belongs to the succinylarginine dihydrolase family. Homodimer.

It carries out the reaction N(2)-succinyl-L-arginine + 2 H2O + 2 H(+) = N(2)-succinyl-L-ornithine + 2 NH4(+) + CO2. The protein operates within amino-acid degradation; L-arginine degradation via AST pathway; L-glutamate and succinate from L-arginine: step 2/5. Functionally, catalyzes the hydrolysis of N(2)-succinylarginine into N(2)-succinylornithine, ammonia and CO(2). The polypeptide is N-succinylarginine dihydrolase (Pseudoalteromonas translucida (strain TAC 125)).